Reading from the N-terminus, the 122-residue chain is Small ribosomal subunit protein uS13 (122 aa).

The segment at 95 to 122 (GLPVRGQRTKTNARTRKGPKKTIAGKKK) is disordered.

The protein belongs to the universal ribosomal protein uS13 family. In terms of assembly, part of the 30S ribosomal subunit. Forms a loose heterodimer with protein S19. Forms two bridges to the 50S subunit in the 70S ribosome.

Functionally, located at the top of the head of the 30S subunit, it contacts several helices of the 16S rRNA. In the 70S ribosome it contacts the 23S rRNA (bridge B1a) and protein L5 of the 50S subunit (bridge B1b), connecting the 2 subunits; these bridges are implicated in subunit movement. Contacts the tRNAs in the A and P-sites. The protein is Small ribosomal subunit protein uS13 of Corynebacterium aurimucosum (strain ATCC 700975 / DSM 44827 / CIP 107346 / CN-1) (Corynebacterium nigricans).